Reading from the N-terminus, the 119-residue chain is Toxin ICK-8 (119 aa).

A signal peptide spans M1–A19. 4 disulfide bridges follow: C59/C74, C67/C80, C71/C116, and C73/C87.

The protein belongs to the neurotoxin 25 family. ICK-8 subfamily. As to expression, expressed by the venom gland.

The protein localises to the secreted. Its function is as follows. Ion channel inhibitor. The protein is Toxin ICK-8 of Trittame loki (Brush-footed trapdoor spider).